We begin with the raw amino-acid sequence, 178 residues long: Ribosome maturation factor RimP (178 aa).

This sequence belongs to the RimP family.

The protein resides in the cytoplasm. Functionally, required for maturation of 30S ribosomal subunits. This chain is Ribosome maturation factor RimP, found in Streptococcus pyogenes serotype M1.